Reading from the N-terminus, the 294-residue chain is Zinc finger protein CONSTANS-LIKE 3 (294 aa).

8 residues coordinate Zn(2+): C8, C11, C31, H36, C51, C54, C74, and H79. Residues C8 to L50 form a B box-type 1; atypical zinc finger. Residues C51–I93 form a B box-type 2; atypical zinc finger. Positions R229–R271 constitute a CCT domain.

It belongs to the CONSTANS family.

It is found in the nucleus. This chain is Zinc finger protein CONSTANS-LIKE 3 (COL3), found in Arabidopsis thaliana (Mouse-ear cress).